A 397-amino-acid chain; its full sequence is Tryptophan synthase beta chain (397 aa).

Lysine 87 is subject to N6-(pyridoxal phosphate)lysine.

The protein belongs to the TrpB family. In terms of assembly, tetramer of two alpha and two beta chains. The cofactor is pyridoxal 5'-phosphate.

It catalyses the reaction (1S,2R)-1-C-(indol-3-yl)glycerol 3-phosphate + L-serine = D-glyceraldehyde 3-phosphate + L-tryptophan + H2O. It functions in the pathway amino-acid biosynthesis; L-tryptophan biosynthesis; L-tryptophan from chorismate: step 5/5. Functionally, the beta subunit is responsible for the synthesis of L-tryptophan from indole and L-serine. In Escherichia coli O17:K52:H18 (strain UMN026 / ExPEC), this protein is Tryptophan synthase beta chain.